Here is a 122-residue protein sequence, read N- to C-terminus: Histone H2B subacrosomal variant (122 aa).

Residues 1-25 (MARNVTKRNKRCRGHQKAIYKKKSH) show a composition bias toward basic residues. The tract at residues 1-30 (MARNVTKRNKRCRGHQKAIYKKKSHSSSES) is disordered.

Belongs to the histone H2B family. In terms of tissue distribution, testis-specific. Restricted to the spermatid population of seminiferous epithelium. Not present in Sertoli cells, spermatogonia, spermatocytes or cells of the interstitial tissue (at protein level).

It is found in the cytoplasm. May act as an acrosome-nuclear docking protein in sperm. This chain is Histone H2B subacrosomal variant (SUBH2BV), found in Bos taurus (Bovine).